The chain runs to 320 residues: Cytochrome f (320 aa).

Residues 1–35 (MQTINTFSWINQRITRSISVLLLVYIITRTSISSA) form the signal peptide. Residues Y36, C56, C59, and H60 each coordinate heme. Residues 286-306 (VQGLLFFLASVILAQIFLVLK) traverse the membrane as a helical segment.

This sequence belongs to the cytochrome f family. The 4 large subunits of the cytochrome b6-f complex are cytochrome b6, subunit IV (17 kDa polypeptide, petD), cytochrome f and the Rieske protein, while the 4 small subunits are PetG, PetL, PetM and PetN. The complex functions as a dimer. Requires heme as cofactor.

Its subcellular location is the plastid thylakoid membrane. Component of the cytochrome b6-f complex, which mediates electron transfer between photosystem II (PSII) and photosystem I (PSI), cyclic electron flow around PSI, and state transitions. This Cuscuta exaltata (Tall dodder) protein is Cytochrome f.